A 219-amino-acid polypeptide reads, in one-letter code: 7-cyano-7-deazaguanine synthase (219 aa).

10–20 (FSGGQDSTTCL) is a binding site for ATP. Zn(2+) is bound by residues Cys-188, Cys-196, Cys-199, and Cys-202.

This sequence belongs to the QueC family. Zn(2+) is required as a cofactor.

The catalysed reaction is 7-carboxy-7-deazaguanine + NH4(+) + ATP = 7-cyano-7-deazaguanine + ADP + phosphate + H2O + H(+). It functions in the pathway purine metabolism; 7-cyano-7-deazaguanine biosynthesis. Its function is as follows. Catalyzes the ATP-dependent conversion of 7-carboxy-7-deazaguanine (CDG) to 7-cyano-7-deazaguanine (preQ(0)). The chain is 7-cyano-7-deazaguanine synthase from Neisseria gonorrhoeae (strain NCCP11945).